The primary structure comprises 237 residues: Ribosomal RNA small subunit methyltransferase G (237 aa).

Residues Gly-78, Phe-83, 129-130, and Arg-148 contribute to the S-adenosyl-L-methionine site; that span reads AE. A disordered region spans residues 218-237; the sequence is KKETPNKFPRKAGMPNKRPL.

Belongs to the methyltransferase superfamily. RNA methyltransferase RsmG family.

Its subcellular location is the cytoplasm. In terms of biological role, specifically methylates the N7 position of a guanine in 16S rRNA. In Streptococcus suis (strain 98HAH33), this protein is Ribosomal RNA small subunit methyltransferase G.